The following is a 240-amino-acid chain: MAAIKDENNDHLVQSDNPEHPSNLIPALCRNFYSHGWVTGTGGGASIKRDNHIFIAPSGVQKELIQPHDIFVLQYPTPKYPPSARQYIRKPLELKPSACTPLFLAAFDRGAGCCIHTHSQWAVLVTLLVEREKGPEGCFEISNIEQIKGIPRGKGKGMLGFFDTLKIPIIENTAFEEDLTSSLEEAMEKYPDTYAVLVRRHGIYVWGDDVAKAKTQCESLDYLFQLAVEMHKLGLPWVKS.

C99 contacts substrate. The Zn(2+) site is built by H116 and H118. E145 functions as the Proton donor/acceptor in the catalytic mechanism. H201 is a binding site for Zn(2+).

This sequence belongs to the aldolase class II family. MtnB subfamily. It depends on Zn(2+) as a cofactor.

The protein resides in the cytoplasm. It carries out the reaction 5-(methylsulfanyl)-D-ribulose 1-phosphate = 5-methylsulfanyl-2,3-dioxopentyl phosphate + H2O. It participates in amino-acid biosynthesis; L-methionine biosynthesis via salvage pathway; L-methionine from S-methyl-5-thio-alpha-D-ribose 1-phosphate: step 2/6. Functionally, catalyzes the dehydration of methylthioribulose-1-phosphate (MTRu-1-P) into 2,3-diketo-5-methylthiopentyl-1-phosphate (DK-MTP-1-P). This chain is Methylthioribulose-1-phosphate dehydratase, found in Ajellomyces capsulatus (strain H143) (Darling's disease fungus).